The sequence spans 320 residues: PUP1 protein homolog (320 aa).

2 helical membrane-spanning segments follow: residues 66 to 85 (MWGGWLGFSAVFLTPFAYRY) and 100 to 119 (FVLGVMALFFATNFAGRSMY). The tract at residues 205–320 (GGVFNGSPFM…QSGRYGGNRS (116 aa)) is disordered. Position 230 is a phosphoserine (Ser-230). The segment covering 253-266 (GDNSSSSSWENIRN) has biased composition (polar residues). A compositionally biased stretch (basic and acidic residues) spans 267–284 (TSRDQSQESDASVDHESD).

The protein belongs to the PUP1 family.

It is found in the mitochondrion membrane. This chain is PUP1 protein homolog, found in Saccharomyces cerevisiae (strain ATCC 204508 / S288c) (Baker's yeast).